The following is an 81-amino-acid chain: Large ribosomal subunit protein bL31 (81 aa).

This sequence belongs to the bacterial ribosomal protein bL31 family. Type A subfamily. As to quaternary structure, part of the 50S ribosomal subunit.

Binds the 23S rRNA. The sequence is that of Large ribosomal subunit protein bL31 (rpmE) from Fusobacterium nucleatum subsp. nucleatum (strain ATCC 25586 / DSM 15643 / BCRC 10681 / CIP 101130 / JCM 8532 / KCTC 2640 / LMG 13131 / VPI 4355).